Reading from the N-terminus, the 289-residue chain is Pseudouridine-5'-phosphate glycosidase (289 aa).

The active-site Proton donor is Glu10. Substrate contacts are provided by Lys71 and Val91. Asp121 serves as a coordination point for Mn(2+). 123–125 lines the substrate pocket; it reads SQD. Catalysis depends on Lys142, which acts as the Nucleophile.

Belongs to the pseudouridine-5'-phosphate glycosidase family. Homotrimer. The cofactor is Mn(2+).

The catalysed reaction is D-ribose 5-phosphate + uracil = psi-UMP + H2O. Functionally, catalyzes the reversible cleavage of pseudouridine 5'-phosphate (PsiMP) to ribose 5-phosphate and uracil. Functions biologically in the cleavage direction, as part of a pseudouridine degradation pathway. The protein is Pseudouridine-5'-phosphate glycosidase of Kosmotoga olearia (strain ATCC BAA-1733 / DSM 21960 / TBF 19.5.1).